We begin with the raw amino-acid sequence, 109 residues long: Large ribosomal subunit protein uL22 (109 aa).

Belongs to the universal ribosomal protein uL22 family. As to quaternary structure, part of the 50S ribosomal subunit.

In terms of biological role, this protein binds specifically to 23S rRNA; its binding is stimulated by other ribosomal proteins, e.g. L4, L17, and L20. It is important during the early stages of 50S assembly. It makes multiple contacts with different domains of the 23S rRNA in the assembled 50S subunit and ribosome. The globular domain of the protein is located near the polypeptide exit tunnel on the outside of the subunit, while an extended beta-hairpin is found that lines the wall of the exit tunnel in the center of the 70S ribosome. The sequence is that of Large ribosomal subunit protein uL22 from Thiobacillus denitrificans (strain ATCC 25259 / T1).